Here is a 154-residue protein sequence, read N- to C-terminus: Lipoprotein signal peptidase (154 aa).

2 helical membrane passes run 55–75 and 84–104; these read GHMW…IYIM and LFSI…IDRV. Residues aspartate 111 and aspartate 129 contribute to the active site. The chain crosses the membrane as a helical span at residues 124 to 144; the sequence is IFNVADAALSVGVVLMLVYVF.

This sequence belongs to the peptidase A8 family.

Its subcellular location is the cell membrane. The catalysed reaction is Release of signal peptides from bacterial membrane prolipoproteins. Hydrolyzes -Xaa-Yaa-Zaa-|-(S,diacylglyceryl)Cys-, in which Xaa is hydrophobic (preferably Leu), and Yaa (Ala or Ser) and Zaa (Gly or Ala) have small, neutral side chains.. Its pathway is protein modification; lipoprotein biosynthesis (signal peptide cleavage). In terms of biological role, this protein specifically catalyzes the removal of signal peptides from prolipoproteins. The polypeptide is Lipoprotein signal peptidase (Listeria monocytogenes serotype 4b (strain CLIP80459)).